The primary structure comprises 895 residues: DNA mismatch repair protein MutS (895 aa).

632 to 639 (GPNMAGKS) contacts ATP. Positions 824 to 849 (VTQDKKQVKKQTKNNHSARSGSRQQQ) are disordered. Polar residues predominate over residues 837–849 (NNHSARSGSRQQQ).

The protein belongs to the DNA mismatch repair MutS family.

This protein is involved in the repair of mismatches in DNA. It is possible that it carries out the mismatch recognition step. This protein has a weak ATPase activity. The sequence is that of DNA mismatch repair protein MutS from Desulforapulum autotrophicum (strain ATCC 43914 / DSM 3382 / VKM B-1955 / HRM2) (Desulfobacterium autotrophicum).